We begin with the raw amino-acid sequence, 85 residues long: Senescence-associated and QQS-related protein (85 aa).

A compositionally biased stretch (basic and acidic residues) spans 1–24 (MSFRKVEKKPTEMGRNMTHEKSDS). 2 disordered regions span residues 1-35 (MSFR…PMTV) and 55-85 (SGKA…FPNY). Over residues 58-77 (ARSNYNLTGTAKGTGPINSF) the composition is skewed to polar residues.

In terms of tissue distribution, expressed predominantly within leaves and cotyledons vasculatures. Mainly observed in fully expanded leaves, at the base of mature inflorescences, in senescing leaves and cauline leaves, and, to a lower extent, in hypocotyls and rosette leaves prior to flowering.

Plays a role in carbon allocation, including during senescence and stresses, thus impacting starch accumulation. In Arabidopsis thaliana (Mouse-ear cress), this protein is Senescence-associated and QQS-related protein.